The chain runs to 189 residues: dCTP deaminase (189 aa).

DCTP-binding positions include 112 to 117 (KSTYAR), 136 to 138 (TLE), Gln-157, Tyr-171, and Gln-181. Glu-138 (proton donor/acceptor) is an active-site residue.

It belongs to the dCTP deaminase family. In terms of assembly, homotrimer.

The enzyme catalyses dCTP + H2O + H(+) = dUTP + NH4(+). It participates in pyrimidine metabolism; dUMP biosynthesis; dUMP from dCTP (dUTP route): step 1/2. Its function is as follows. Catalyzes the deamination of dCTP to dUTP. The protein is dCTP deaminase of Xanthomonas euvesicatoria pv. vesicatoria (strain 85-10) (Xanthomonas campestris pv. vesicatoria).